Reading from the N-terminus, the 130-residue chain is Small ribosomal subunit protein uS11 (130 aa).

It belongs to the universal ribosomal protein uS11 family. In terms of assembly, part of the 30S ribosomal subunit. Interacts with proteins S7 and S18. Binds to IF-3.

Its function is as follows. Located on the platform of the 30S subunit, it bridges several disparate RNA helices of the 16S rRNA. Forms part of the Shine-Dalgarno cleft in the 70S ribosome. The protein is Small ribosomal subunit protein uS11 of Alkalilimnicola ehrlichii (strain ATCC BAA-1101 / DSM 17681 / MLHE-1).